A 535-amino-acid chain; its full sequence is CTP synthase (535 aa).

Residues 1–267 are amidoligase domain; it reads MTKYIFVTGG…DQIVLDHFGV (267 aa). Serine 13 provides a ligand contact to CTP. UTP is bound at residue serine 13. 14–19 contacts ATP; the sequence is SLGKGI. An L-glutamine-binding site is contributed by tyrosine 54. Position 71 (aspartate 71) interacts with ATP. Mg(2+) contacts are provided by aspartate 71 and glutamate 141. CTP is bound by residues 148–150, 188–193, and lysine 224; these read DIE and KTKPTQ. UTP-binding positions include 188-193 and lysine 224; that span reads KTKPTQ. Residues 292–535 form the Glutamine amidotransferase type-1 domain; that stretch reads KIALVGKYVA…VAAASREVKD (244 aa). L-glutamine is bound at residue glycine 354. The Nucleophile; for glutamine hydrolysis role is filled by cysteine 381. Residues 382-385, glutamate 405, and arginine 463 each bind L-glutamine; that span reads LGMQ. Catalysis depends on residues histidine 508 and glutamate 510.

It belongs to the CTP synthase family. In terms of assembly, homotetramer.

It catalyses the reaction UTP + L-glutamine + ATP + H2O = CTP + L-glutamate + ADP + phosphate + 2 H(+). It carries out the reaction L-glutamine + H2O = L-glutamate + NH4(+). The enzyme catalyses UTP + NH4(+) + ATP = CTP + ADP + phosphate + 2 H(+). It participates in pyrimidine metabolism; CTP biosynthesis via de novo pathway; CTP from UDP: step 2/2. With respect to regulation, allosterically activated by GTP, when glutamine is the substrate; GTP has no effect on the reaction when ammonia is the substrate. The allosteric effector GTP functions by stabilizing the protein conformation that binds the tetrahedral intermediate(s) formed during glutamine hydrolysis. Inhibited by the product CTP, via allosteric rather than competitive inhibition. In terms of biological role, catalyzes the ATP-dependent amination of UTP to CTP with either L-glutamine or ammonia as the source of nitrogen. Regulates intracellular CTP levels through interactions with the four ribonucleotide triphosphates. This chain is CTP synthase, found in Levilactobacillus brevis (strain ATCC 367 / BCRC 12310 / CIP 105137 / JCM 1170 / LMG 11437 / NCIMB 947 / NCTC 947) (Lactobacillus brevis).